We begin with the raw amino-acid sequence, 379 residues long: Forkhead box protein E1 (379 aa).

Polar residues predominate over residues 1–11; it reads MTAESQQSPTR. Residues 1–65 are disordered; that stretch reads MTAESQQSPT…RRRKRPLQKG (65 aa). A compositionally biased stretch (basic residues) spans 54-63; the sequence is KGRRRKRPLQ. The fork-head DNA-binding region spans 66 to 160; it reads KPPYSYIALI…DSGSFLRRRK (95 aa). The interval 239 to 265 is disordered; that stretch reads HSGSEHAQPPNRSISPEVNSTSSSSCN. Low complexity predominate over residues 251 to 265; it reads SISPEVNSTSSSSCN.

As to expression, first expressed at late neural tube and early tailbud stages in the hypophyseal placode. Expression continues in the developing pituitary at late tailbud stages. As development progresses, expressed in the mesoderm of the branchial arches. At stage 38, expressed in the developing thyroid and in the pharyngeal endoderm.

It localises to the nucleus. Its function is as follows. Transcription factor that binds consensus sites on a variety of gene promoters and activate their transcription. The chain is Forkhead box protein E1 from Xenopus laevis (African clawed frog).